We begin with the raw amino-acid sequence, 182 residues long: Nuclear cap-binding protein subunit 2 (182 aa).

MRNA-binding positions include Y13, Y35, R104–D108, R115–R119, and Q125–V126. The 79-residue stretch at N32–G110 folds into the RRM domain. The interval G114 to N182 is disordered. Positions V126–P136 are enriched in basic and acidic residues. Positions R145 to R175 are enriched in polar residues.

It belongs to the RRM NCBP2 family. As to quaternary structure, component of the nuclear cap-binding complex (CBC), a heterodimer composed of cbc1 and cbc2 that interacts with capped RNAs.

The protein localises to the cytoplasm. It is found in the perinuclear region. The protein resides in the nucleus. Functionally, component of the CBC complex, which binds co-transcriptionally to the 5' cap of pre-mRNAs and is involved in maturation, export and degradation of nuclear mRNAs. This Schizosaccharomyces pombe (strain 972 / ATCC 24843) (Fission yeast) protein is Nuclear cap-binding protein subunit 2 (cbc2).